The sequence spans 326 residues: Malate dehydrogenase (326 aa).

Position 11–17 (11–17) interacts with NAD(+); that stretch reads GAAGQIG. Positions 92 and 98 each coordinate substrate. NAD(+) contacts are provided by residues Asn-105, Gln-112, and 129-131; that span reads VGN. 2 residues coordinate substrate: Asn-131 and Arg-162. Catalysis depends on His-187, which acts as the Proton acceptor.

This sequence belongs to the LDH/MDH superfamily. MDH type 2 family.

It catalyses the reaction (S)-malate + NAD(+) = oxaloacetate + NADH + H(+). Functionally, catalyzes the reversible oxidation of malate to oxaloacetate. The polypeptide is Malate dehydrogenase (Chromobacterium violaceum (strain ATCC 12472 / DSM 30191 / JCM 1249 / CCUG 213 / NBRC 12614 / NCIMB 9131 / NCTC 9757 / MK)).